Here is a 253-residue protein sequence, read N- to C-terminus: Small ribosomal subunit protein uS3 (253 aa).

The KH type-2 domain occupies 21–92 (LNEFLTRELA…SVELYAEKVA (72 aa)). The disordered stretch occupies residues 211–253 (VEPKDEILPTTPISEQKGGKPDPQVPQQPPQQPPAMPPPVPTA). The segment covering 233 to 253 (PQVPQQPPQQPPAMPPPVPTA) has biased composition (pro residues).

It belongs to the universal ribosomal protein uS3 family.

It localises to the cytoplasm. The protein resides in the nucleus. It is found in the nucleolus. Its subcellular location is the mitochondrion inner membrane. The protein localises to the cytoskeleton. It localises to the spindle. The enzyme catalyses 2'-deoxyribonucleotide-(2'-deoxyribose 5'-phosphate)-2'-deoxyribonucleotide-DNA = a 3'-end 2'-deoxyribonucleotide-(2,3-dehydro-2,3-deoxyribose 5'-phosphate)-DNA + a 5'-end 5'-phospho-2'-deoxyribonucleoside-DNA + H(+). Its function is as follows. Component of the small ribosomal subunit. The ribosome is a large ribonucleoprotein complex responsible for the synthesis of proteins in the cell. Has endonuclease activity and plays a role in repair of damaged DNA. Also involved in other processes including regulation of transcription, translation of its cognate mRNA, spindle formation and chromosome movement during mitosis, and apoptosis. In Ambystoma mexicanum (Axolotl), this protein is Small ribosomal subunit protein uS3 (RPS3).